A 248-amino-acid polypeptide reads, in one-letter code: Pulmonary surfactant-associated protein A (248 aa).

A signal peptide spans 1-20; that stretch reads MLLCSLTLTLLWMVASGLEC. A Collagen-like domain is found at 28 to 100; it reads GSPGIPGTPG…PGERGPPGFP (73 aa). A disordered region spans residues 29-102; sequence SPGIPGTPGS…ERGPPGFPAY (74 aa). A 4-hydroxyproline mark is found at Pro-30, Pro-33, Pro-36, Pro-42, Pro-54, Pro-57, Pro-63, Pro-67, and Pro-70. Over residues 42 to 51 the composition is skewed to basic and acidic residues; the sequence is PGRDGRDGIK. Over residues 54–65 the composition is skewed to pro residues; that stretch reads PGPPGPMGPPGG. Residues 69 to 82 are compositionally biased toward low complexity; it reads LPGRDGMTGAPGLP. The span at 84–93 shows a compositional bias: basic and acidic residues; the sequence is ERGEKGEPGE. Residues 132 to 248 enclose the C-type lectin domain; the sequence is LAVGEKVFST…LQYRLAICEF (117 aa). Disulfide bonds link Cys-155–Cys-246 and Cys-224–Cys-238. The N-linked (GlcNAc...) asparagine glycan is linked to Asn-207. Ca(2+) is bound by residues Glu-215, Arg-217, Asn-234, and Asp-235.

It belongs to the SFTPA family. As to quaternary structure, oligomeric complex of 6 set of homotrimers.

Its subcellular location is the secreted. The protein localises to the extracellular space. It localises to the extracellular matrix. It is found in the surface film. In terms of biological role, in presence of calcium ions, it binds to surfactant phospholipids and contributes to lower the surface tension at the air-liquid interface in the alveoli of the mammalian lung and is essential for normal respiration. Enhances the expression of MYO18A/SP-R210 on alveolar macrophages. This Bos taurus (Bovine) protein is Pulmonary surfactant-associated protein A (SFTPA1).